The following is a 253-amino-acid chain: Retinoic acid early-inducible protein 1-beta (253 aa).

The first 28 residues, 1-28 (MAKAAVTKRHHFMIQKLLILLSYGYTNG), serve as a signal peptide directing secretion. An intrachain disulfide couples C37 to C56. N-linked (GlcNAc...) asparagine glycans are attached at residues N38, N70, N83, N143, and N156. C90 and C190 are disulfide-bonded. The disordered stretch occupies residues 198–230 (LKQSKEKPRSTSRSPSITQLTSTSPLPPPSHST). A compositionally biased stretch (low complexity) spans 211 to 221 (SPSITQLTSTS). S229 carries the GPI-anchor amidated serine lipid modification. Positions 230–253 (TSKKGFISVGLIFISLLFAFAFAM) are cleaved as a propeptide — removed in mature form.

It belongs to the NKG2D ligand family. Glycosylated. As to expression, expressed predominantly in embryonic brain.

The protein resides in the cell membrane. Acts as a ligand for KLRK1. This chain is Retinoic acid early-inducible protein 1-beta (Raet1b), found in Mus musculus (Mouse).